The following is a 208-amino-acid chain: Redox-sensing transcriptional repressor Rex (208 aa).

Positions 16–55 (VYSRYLENLYRKGITTVSSADIAQGVGVTSAQVRKDLAYF) form a DNA-binding region, H-T-H motif. 90–95 (GAGNLG) provides a ligand contact to NAD(+).

Belongs to the transcriptional regulatory Rex family. As to quaternary structure, homodimer.

It localises to the cytoplasm. Its function is as follows. Modulates transcription in response to changes in cellular NADH/NAD(+) redox state. The protein is Redox-sensing transcriptional repressor Rex of Carboxydothermus hydrogenoformans (strain ATCC BAA-161 / DSM 6008 / Z-2901).